Here is a 573-residue protein sequence, read N- to C-terminus: Kinesin light chain 1 (573 aa).

The stretch at 27-156 forms a coiled coil; the sequence is KTKQVIQGLE…HLEFMNQLKK (130 aa). Over residues 155–176 the composition is skewed to basic and acidic residues; that stretch reads KKYDDDISPSEDKDTDSTKEPL. A disordered region spans residues 155–203; the sequence is KKYDDDISPSEDKDTDSTKEPLDDLFPNDEDDPGQGIQQQHSSAAAAAQ. Residue serine 162 is modified to Phosphoserine. Low complexity predominate over residues 188-203; that stretch reads GQGIQQQHSSAAAAAQ. TPR repeat units lie at residues 213–246, 255–288, 297–330, 339–372, and 381–414; these read LRTL…LEKT, ATML…REKT, AATL…REKV, AKQL…YQTK, and AKTK…AHER. Tyrosine 449 is modified (phosphotyrosine). Position 460 is a phosphoserine (serine 460). The stretch at 464-497 is one TPR 6 repeat; the sequence is TTTLKNLGALYRRQGKFEAAETLEEAAMRSRKQG. A phosphoserine; by AMPK mark is found at serine 521 and serine 524. Glutamate 547 carries the phosphoserine modification. Positions 553–573 are disordered; the sequence is SGRASFCGKRQQQQWPGRRHR.

This sequence belongs to the kinesin light chain family. Oligomeric complex composed of two heavy chains and two light chains. Interacts with SPAG9. Interacts with ATCAY; may link mitochondria to KLC1 and regulate mitochondria localization into neuron projections. Interacts (via TPR repeats) with TOR1A; the interaction associates TOR1A with the kinesin oligomeric complex. Interacts with BORCS5. Interacts with MAPK8IP3/JIP3 and NTRK2/TRKB; interaction with NTRK2/TRKB is mediated by MAPK8IP3/JIP3. Interacts with CLSTN1; phosphorylation at Ser-460 inhibits interaction with CLSTN1. As to quaternary structure, (Microbial infection) Interacts with adenovirus hexon-interlacing protein; this interaction leads to capsid disruption at the nuclear pore complex during virus entry into host cell. Post-translationally, phosphorylation at Ser-460 by ERK inhibits interaction with CLSTN1 and localization to cytoplasmic vesicles. As to expression, found in a variety of tissues. Mostly abundant in brain and spine.

Its subcellular location is the cell projection. The protein resides in the growth cone. The protein localises to the cytoplasmic vesicle. It is found in the cytoplasm. It localises to the cytoskeleton. Functionally, kinesin is a microtubule-associated force-producing protein that may play a role in organelle transport. The light chain may function in coupling of cargo to the heavy chain or in the modulation of its ATPase activity. This is Kinesin light chain 1 (KLC1) from Homo sapiens (Human).